Consider the following 131-residue polypeptide: Fluoride-specific ion channel FluC 1 (131 aa).

4 consecutive transmembrane segments (helical) span residues 4–24 (LALP…GAWL), 40–60 (HWGT…VLAL), 73–93 (LILL…TFAV), and 108–128 (LVLA…GVGL). Gly83 and Ser86 together coordinate Na(+).

This sequence belongs to the fluoride channel Fluc/FEX (TC 1.A.43) family.

It is found in the cell inner membrane. It catalyses the reaction fluoride(in) = fluoride(out). Its activity is regulated as follows. Na(+) is not transported, but it plays an essential structural role and its presence is essential for fluoride channel function. Its function is as follows. Fluoride-specific ion channel. Important for reducing fluoride concentration in the cell, thus reducing its toxicity. In Prochlorococcus marinus (strain MIT 9313), this protein is Fluoride-specific ion channel FluC 1.